The chain runs to 444 residues: N-succinylarginine dihydrolase (444 aa).

Substrate-binding positions include 19-28 (SGLSVGNIAS), N110, and 137-138 (HR). E174 is an active-site residue. Residue R214 participates in substrate binding. H250 is a catalytic residue. Substrate-binding residues include D252 and N362. C368 serves as the catalytic Nucleophile.

The protein belongs to the succinylarginine dihydrolase family. As to quaternary structure, homodimer.

The enzyme catalyses N(2)-succinyl-L-arginine + 2 H2O + 2 H(+) = N(2)-succinyl-L-ornithine + 2 NH4(+) + CO2. It functions in the pathway amino-acid degradation; L-arginine degradation via AST pathway; L-glutamate and succinate from L-arginine: step 2/5. Functionally, catalyzes the hydrolysis of N(2)-succinylarginine into N(2)-succinylornithine, ammonia and CO(2). The protein is N-succinylarginine dihydrolase of Aliivibrio salmonicida (strain LFI1238) (Vibrio salmonicida (strain LFI1238)).